Consider the following 348-residue polypeptide: Dual-specificity RNA methyltransferase RlmN (348 aa).

The active-site Proton acceptor is glutamate 94. Residues 100-330 (GKHNWTACIS…TAIIRASRGR (231 aa)) enclose the Radical SAM core domain. An intrachain disulfide couples cysteine 107 to cysteine 336. [4Fe-4S] cluster contacts are provided by cysteine 114, cysteine 118, and cysteine 121. S-adenosyl-L-methionine is bound by residues 163-164 (GE), serine 195, 217-219 (SLN), and asparagine 293. Catalysis depends on cysteine 336, which acts as the S-methylcysteine intermediate.

It belongs to the radical SAM superfamily. RlmN family. The cofactor is [4Fe-4S] cluster.

Its subcellular location is the cytoplasm. The enzyme catalyses adenosine(2503) in 23S rRNA + 2 reduced [2Fe-2S]-[ferredoxin] + 2 S-adenosyl-L-methionine = 2-methyladenosine(2503) in 23S rRNA + 5'-deoxyadenosine + L-methionine + 2 oxidized [2Fe-2S]-[ferredoxin] + S-adenosyl-L-homocysteine. It carries out the reaction adenosine(37) in tRNA + 2 reduced [2Fe-2S]-[ferredoxin] + 2 S-adenosyl-L-methionine = 2-methyladenosine(37) in tRNA + 5'-deoxyadenosine + L-methionine + 2 oxidized [2Fe-2S]-[ferredoxin] + S-adenosyl-L-homocysteine. In terms of biological role, specifically methylates position 2 of adenine 2503 in 23S rRNA and position 2 of adenine 37 in tRNAs. m2A2503 modification seems to play a crucial role in the proofreading step occurring at the peptidyl transferase center and thus would serve to optimize ribosomal fidelity. The polypeptide is Dual-specificity RNA methyltransferase RlmN (Syntrophus aciditrophicus (strain SB)).